Consider the following 367-residue polypeptide: UDP-galactopyranose mutase (367 aa).

Residues phenylalanine 12, 31–32 (EK), asparagine 39, and 56–57 (HI) contribute to the FAD site. Residue phenylalanine 12 participates in UDP-alpha-D-galactose binding. Asparagine 80, threonine 152, tryptophan 156, and tyrosine 181 together coordinate UDP-alpha-D-galactose. Residue 212–213 (DF) coordinates FAD. Positions 268, 278, and 311 each coordinate UDP-alpha-D-galactose. Arginine 340 is a binding site for FAD. Tyrosine 346 contributes to the UDP-alpha-D-galactose binding site. 347 to 352 (YDMHQV) contributes to the FAD binding site.

As to quaternary structure, homodimer. The cofactor is FAD.

The catalysed reaction is UDP-alpha-D-galactose = UDP-alpha-D-galactofuranose. The protein operates within bacterial outer membrane biogenesis; lipopolysaccharide biosynthesis. In terms of biological role, catalyzes the interconversion through a 2-keto intermediate of uridine diphosphogalactopyranose (UDP-GalP) into uridine diphosphogalactofuranose (UDP-GalF). The polypeptide is UDP-galactopyranose mutase (glf) (Escherichia coli (strain K12)).